We begin with the raw amino-acid sequence, 271 residues long: 3-methyl-2-oxobutanoate hydroxymethyltransferase (271 aa).

Mg(2+)-binding residues include aspartate 52 and aspartate 91. Residues 52–53, aspartate 91, and lysine 121 each bind 3-methyl-2-oxobutanoate; that span reads DS. Glutamate 123 lines the Mg(2+) pocket. Glutamate 189 serves as the catalytic Proton acceptor.

It belongs to the PanB family. As to quaternary structure, homodecamer; pentamer of dimers. Mg(2+) serves as cofactor.

The protein localises to the cytoplasm. It catalyses the reaction 3-methyl-2-oxobutanoate + (6R)-5,10-methylene-5,6,7,8-tetrahydrofolate + H2O = 2-dehydropantoate + (6S)-5,6,7,8-tetrahydrofolate. The protein operates within cofactor biosynthesis; (R)-pantothenate biosynthesis; (R)-pantoate from 3-methyl-2-oxobutanoate: step 1/2. Catalyzes the reversible reaction in which hydroxymethyl group from 5,10-methylenetetrahydrofolate is transferred onto alpha-ketoisovalerate to form ketopantoate. This chain is 3-methyl-2-oxobutanoate hydroxymethyltransferase, found in Acidothermus cellulolyticus (strain ATCC 43068 / DSM 8971 / 11B).